The chain runs to 295 residues: Nitrogenase iron protein (295 aa).

Gly10–Ser17 serves as a coordination point for ATP. Cys98 contributes to the [4Fe-4S] cluster binding site. An ADP-ribosylarginine; by dinitrogenase reductase ADP-ribosyltransferase modification is found at Arg101. Cys133 is a binding site for [4Fe-4S] cluster.

Belongs to the NifH/BchL/ChlL family. As to quaternary structure, homodimer. It depends on [4Fe-4S] cluster as a cofactor. Post-translationally, the reversible ADP-ribosylation of Arg-101 inactivates the nitrogenase reductase and regulates nitrogenase activity.

The enzyme catalyses N2 + 8 reduced [2Fe-2S]-[ferredoxin] + 16 ATP + 16 H2O = H2 + 8 oxidized [2Fe-2S]-[ferredoxin] + 2 NH4(+) + 16 ADP + 16 phosphate + 6 H(+). In terms of biological role, the key enzymatic reactions in nitrogen fixation are catalyzed by the nitrogenase complex, which has 2 components: the iron protein and the molybdenum-iron protein. The chain is Nitrogenase iron protein from Tolumonas auensis (strain DSM 9187 / NBRC 110442 / TA 4).